Here is a 325-residue protein sequence, read N- to C-terminus: RNA ligase 1 (325 aa).

Mg(2+) is required as a cofactor. The cofactor is Mn(2+). Post-translationally, AMPylates itself (auto-AMPylation).

It carries out the reaction ATP + (ribonucleotide)n-3'-hydroxyl + 5'-phospho-(ribonucleotide)m = (ribonucleotide)n+m + AMP + diphosphate.. Functions as an RNA ligase, in vitro. The ligation reaction entails three nucleotidyl transfer steps. In the first step, the RNA ligase reacts with ATP in the absence of nucleic acid to form a covalent ligase-AMP intermediate and release pyrophosphate. In step 2, the ligase-AMP binds to the nucleic acid and transfers the adenylate to the 5'-PO4 terminus to form an adenylylated intermediate. In step 3, the RNA ligase directs the attack of the 3'-OH on the 5'-phosphoanhydride linkage, resulting in a repaired 3'-5' phosphodiester and release of AMP. Exhibits selectivity for single-stranded RNA substrates and may not have nick-sealing activity on double-stranded DNA-RNA hybrids. May play a role in maintaining RNA integrity under stress conditions, for example in response to reactive oxygen species (ROS). The polypeptide is RNA ligase 1 (Pongo abelii (Sumatran orangutan)).